We begin with the raw amino-acid sequence, 117 residues long: NADPH-dependent 7-cyano-7-deazaguanine reductase (117 aa).

The active-site Thioimide intermediate is the C31. D38 (proton donor) is an active-site residue. Residues 53 to 55 (IEL) and 72 to 73 (YE) each bind substrate.

This sequence belongs to the GTP cyclohydrolase I family. QueF type 1 subfamily.

The protein localises to the cytoplasm. The catalysed reaction is 7-aminomethyl-7-carbaguanine + 2 NADP(+) = 7-cyano-7-deazaguanine + 2 NADPH + 3 H(+). Its pathway is tRNA modification; tRNA-queuosine biosynthesis. In terms of biological role, catalyzes the NADPH-dependent reduction of 7-cyano-7-deazaguanine (preQ0) to 7-aminomethyl-7-deazaguanine (preQ1). The chain is NADPH-dependent 7-cyano-7-deazaguanine reductase from Chlorobaculum tepidum (strain ATCC 49652 / DSM 12025 / NBRC 103806 / TLS) (Chlorobium tepidum).